The chain runs to 986 residues: Isoleucine--tRNA ligase (986 aa).

The short motif at 534 to 538 (EMHKS) is the 'KMSKS' region element. Lysine 537 lines the ATP pocket.

The protein belongs to the class-I aminoacyl-tRNA synthetase family. IleS type 2 subfamily. As to quaternary structure, monomer. Zn(2+) serves as cofactor.

Its subcellular location is the cytoplasm. The catalysed reaction is tRNA(Ile) + L-isoleucine + ATP = L-isoleucyl-tRNA(Ile) + AMP + diphosphate. Its function is as follows. Catalyzes the attachment of isoleucine to tRNA(Ile). As IleRS can inadvertently accommodate and process structurally similar amino acids such as valine, to avoid such errors it has two additional distinct tRNA(Ile)-dependent editing activities. One activity is designated as 'pretransfer' editing and involves the hydrolysis of activated Val-AMP. The other activity is designated 'posttransfer' editing and involves deacylation of mischarged Val-tRNA(Ile). The polypeptide is Isoleucine--tRNA ligase (ileS) (Saccharolobus solfataricus (strain ATCC 35092 / DSM 1617 / JCM 11322 / P2) (Sulfolobus solfataricus)).